A 449-amino-acid polypeptide reads, in one-letter code: tRNA(Ile)-lysidine synthase (449 aa).

35–40 (SGGIDS) lines the ATP pocket.

It belongs to the tRNA(Ile)-lysidine synthase family.

Its subcellular location is the cytoplasm. The catalysed reaction is cytidine(34) in tRNA(Ile2) + L-lysine + ATP = lysidine(34) in tRNA(Ile2) + AMP + diphosphate + H(+). Its function is as follows. Ligates lysine onto the cytidine present at position 34 of the AUA codon-specific tRNA(Ile) that contains the anticodon CAU, in an ATP-dependent manner. Cytidine is converted to lysidine, thus changing the amino acid specificity of the tRNA from methionine to isoleucine. The sequence is that of tRNA(Ile)-lysidine synthase from Coxiella burnetii (strain RSA 493 / Nine Mile phase I).